We begin with the raw amino-acid sequence, 201 residues long: DeSI-like protein sdu1 (201 aa).

The 143-residue stretch at M1–L143 folds into the PPPDE domain. Residues H29 and C105 contribute to the active site. The tract at residues G146–P201 is disordered. Positions D152–T167 are enriched in acidic residues. Residues D191–P201 are compositionally biased toward polar residues.

This sequence belongs to the DeSI family.

It is found in the cytoplasm. Its function is as follows. Has a role in meiosis. This chain is DeSI-like protein sdu1 (sdu1), found in Schizosaccharomyces pombe (strain 972 / ATCC 24843) (Fission yeast).